The primary structure comprises 141 residues: Arsenate reductase (141 aa).

Cys12 functions as the Nucleophile; cysteine thioarsenate intermediate in the catalytic mechanism.

The protein belongs to the ArsC family.

The catalysed reaction is [glutaredoxin]-dithiol + arsenate + glutathione + H(+) = glutathionyl-S-S-[glutaredoxin] + arsenite + H2O. Functionally, involved in resistance to arsenate. Catalyzes the reduction of arsenate [As(V)] to arsenite [As(III)]. The protein is Arsenate reductase of Escherichia coli.